Consider the following 360-residue polypeptide: MPRITVALIFGGRSTEHEISIISAKSIAANISAERYKVIPLYITHQGTWLCEGIARDILNLDLSALLRNSSPEAAAMALDRMVEEAEQKPFNLDFRAIGIEVAFLTLHGTYGEDGRIQGFLDTCNIPYTGCGVLASALTMDKALTKLCVADAGIAVAPSITLLSAEYHADTEKVHSRIEEKFIYPFFVKPANLGSSIGISKVHHREQLPAALKSACSLDSKIVVEKAITGREIEVAVLGNDEPEVSVCGEIEPGSDFYDYHDKYIHNSAKLFIPARIPDEMQSEVRSIALKAYKALGCRGMSRIDFFVDEKRGTIVLNEVNTIPGFTDISMFPRLMAASGHSFPELAERLLQLALETLRP.

One can recognise an ATP-grasp domain in the interval 146-352 (KLCVADAGIA…FPELAERLLQ (207 aa)). 179–234 (EEKFIYPFFVKPANLGSSIGISKVHHREQLPAALKSACSLDSKIVVEKAITGREIE) is an ATP binding site. Mg(2+)-binding residues include Asp-305, Glu-319, and Asn-321.

Belongs to the D-alanine--D-alanine ligase family. The cofactor is Mg(2+). It depends on Mn(2+) as a cofactor.

The protein resides in the cytoplasm. It catalyses the reaction 2 D-alanine + ATP = D-alanyl-D-alanine + ADP + phosphate + H(+). The protein operates within cell wall biogenesis; peptidoglycan biosynthesis. In terms of biological role, cell wall formation. The protein is D-alanine--D-alanine ligase of Pelodictyon phaeoclathratiforme (strain DSM 5477 / BU-1).